The following is a 95-amino-acid chain: UPF0235 protein PTH_1821 (95 aa).

It belongs to the UPF0235 family.

This is UPF0235 protein PTH_1821 from Pelotomaculum thermopropionicum (strain DSM 13744 / JCM 10971 / SI).